Here is a 371-residue protein sequence, read N- to C-terminus: Cytochrome b (371 aa).

Transmembrane regions (helical) follow at residues 25–45 (FGSM…FLAV), 69–90 (WMMQ…YIHI), 105–125 (WLSG…GXXX), 170–190 (XXXX…XXXX), 218–238 (YKDL…VSFL), 280–300 (LGGA…PFTH), 312–332 (IMQL…WAAT), and 339–358 (FTMI…IMNP). 2 residues coordinate heme b: His-75 and His-89. Heme b contacts are provided by Xaa-174 and Xaa-188.

It belongs to the cytochrome b family. As to quaternary structure, the cytochrome bc1 complex contains 3 respiratory subunits (MT-CYB, CYC1 and UQCRFS1), 2 core proteins (UQCRC1 and UQCRC2) and probably 6 low-molecular weight proteins. Heme b serves as cofactor.

The protein resides in the mitochondrion inner membrane. Its function is as follows. Component of the ubiquinol-cytochrome c reductase complex (complex III or cytochrome b-c1 complex) that is part of the mitochondrial respiratory chain. The b-c1 complex mediates electron transfer from ubiquinol to cytochrome c. Contributes to the generation of a proton gradient across the mitochondrial membrane that is then used for ATP synthesis. In Eryx tataricus (Tartar sand boa), this protein is Cytochrome b (MT-CYB).